Reading from the N-terminus, the 135-residue chain is Small ribosomal subunit protein uS9 (135 aa).

Positions 108–118 (VGDPRRTEPHK) are enriched in basic and acidic residues. The tract at residues 108–135 (VGDPRRTEPHKPNRSTKGPRAKRQKSYR) is disordered. Basic residues predominate over residues 119–135 (PNRSTKGPRAKRQKSYR).

Belongs to the universal ribosomal protein uS9 family.

In Pyrococcus horikoshii (strain ATCC 700860 / DSM 12428 / JCM 9974 / NBRC 100139 / OT-3), this protein is Small ribosomal subunit protein uS9 (rps9).